A 706-amino-acid polypeptide reads, in one-letter code: Methionine--tRNA ligase (706 aa).

The short motif at 13–23 is the 'HIGH' region element; the sequence is PYANGNFHIGH. Residues Cys144, Cys147, Cys157, and Cys160 each coordinate Zn(2+). The 'KMSKS' region signature appears at 341–345; sequence KMSKS. Lys344 contributes to the ATP binding site. The tRNA-binding domain maps to 600–706; sequence DFAKIDLRIA…PGATPGMRVR (107 aa).

It belongs to the class-I aminoacyl-tRNA synthetase family. MetG type 1 subfamily. Homodimer. Requires Zn(2+) as cofactor.

Its subcellular location is the cytoplasm. It catalyses the reaction tRNA(Met) + L-methionine + ATP = L-methionyl-tRNA(Met) + AMP + diphosphate. In terms of biological role, is required not only for elongation of protein synthesis but also for the initiation of all mRNA translation through initiator tRNA(fMet) aminoacylation. In Paracidovorax citrulli (strain AAC00-1) (Acidovorax citrulli), this protein is Methionine--tRNA ligase.